We begin with the raw amino-acid sequence, 890 residues long: MTQYTPMIQQYLKVKADYQDAFLFFRLGDFYEMFFEDAVKAAHELEITLTSRDGGSSERIPMCGVPYHAAKNYIEQLVEKGYKVAVCEQVEDPKTAKGVVRREVVQLITPGTMMEGRTIDEKENNFLAALTHFEDGSYALACNDLTTGQNTVTLLTGSVEDILLEVYATGSKEIVVDSSFSKDELNKLTETLKMTISYEDATAIPEGLEHLVKNVSQAKLIKAVGRLFNYVIRTQKRSLDHLQPVEIYYTNQFMKIDVHSKRNLELTETLRTKEKTGSLLWLLDKTKTAMGGRMLKQWMERPLIQKERIEERLEMVETFVNDYFLREDLKEKLKEVYDLERLAGKVAFGNVNARDLLQLRRSLLQVPAILEAISLLDNAYAARLIQGADPCESLTELLGRSIQENPPLSIKDGDIIKDGYNDKLDQYRYVSKNGKTWIAELEKRERDITGIKSLKIGYNRIFGYYIEVTKANLGALPEGRYERKQTLANAERFITDELKEKETLILEAEEKIVQLEYDLFTALREEVKVFIPKLQHLAKVISELDVLQSFATVSEEEQFVKPVLTTKREIFIKDGRHPVVEKVLNGKLYVPNDCIMPENMDVFLITGPNMSGKSTYMRQLALVTVMSQIGCFVPATEAVLPVFDQIFTRIGAADDLISGQSTFMVEMLEAKNAIANASERSLILFDEIGRGTSTYDGMALAQAIIEHIHDQIGAKTLFSTHYHELTVLEDSLDQLKNVHVSAIEENGKVVFLHKIQDGAADKSYGIHVAQLAELPDSLIARAKEVLAQLEGQEEIVIPKRVEVKEQEVIPEPVVVKEEPVAIEETKVDNEEESQLSFFGAEQSSKKQDKPVLDAKETAVLTQIKKIDLLDMTPLEAMNELYRLQKKLKKG.

An ATP-binding site is contributed by 607 to 614 (GPNMSGKS).

It belongs to the DNA mismatch repair MutS family.

Its function is as follows. This protein is involved in the repair of mismatches in DNA. It is possible that it carries out the mismatch recognition step. This protein has a weak ATPase activity. In Bacillus thuringiensis (strain Al Hakam), this protein is DNA mismatch repair protein MutS.